A 188-amino-acid chain; its full sequence is NAD(P)H-quinone oxidoreductase subunit J (188 aa).

Positions 1 to 12 (MSETPSKQTAAS) are enriched in polar residues. The interval 1-23 (MSETPSKQTAASDETGAVVAPEP) is disordered.

This sequence belongs to the complex I 30 kDa subunit family. In terms of assembly, NDH-1 can be composed of about 15 different subunits; different subcomplexes with different compositions have been identified which probably have different functions.

The protein resides in the cellular thylakoid membrane. It catalyses the reaction a plastoquinone + NADH + (n+1) H(+)(in) = a plastoquinol + NAD(+) + n H(+)(out). The catalysed reaction is a plastoquinone + NADPH + (n+1) H(+)(in) = a plastoquinol + NADP(+) + n H(+)(out). In terms of biological role, NDH-1 shuttles electrons from an unknown electron donor, via FMN and iron-sulfur (Fe-S) centers, to quinones in the respiratory and/or the photosynthetic chain. The immediate electron acceptor for the enzyme in this species is believed to be plastoquinone. Couples the redox reaction to proton translocation, and thus conserves the redox energy in a proton gradient. Cyanobacterial NDH-1 also plays a role in inorganic carbon-concentration. This chain is NAD(P)H-quinone oxidoreductase subunit J, found in Synechococcus sp. (strain CC9605).